We begin with the raw amino-acid sequence, 520 residues long: Cysteine--tRNA ligase (520 aa).

Cys29 is a binding site for Zn(2+). The 'HIGH' region signature appears at 31 to 41; the sequence is PTVYNYPHLGN. Zn(2+) is bound by residues Cys227, His252, and Glu256. A 'KMSKS' region motif is present at residues 301-305; it reads KMSKS. ATP is bound at residue Lys304.

The protein belongs to the class-I aminoacyl-tRNA synthetase family. In terms of assembly, monomer. Zn(2+) is required as a cofactor.

The protein resides in the cytoplasm. The catalysed reaction is tRNA(Cys) + L-cysteine + ATP = L-cysteinyl-tRNA(Cys) + AMP + diphosphate. The polypeptide is Cysteine--tRNA ligase (cysS) (Treponema pallidum (strain Nichols)).